A 259-amino-acid polypeptide reads, in one-letter code: MQKPVPKKHLGQNFLKDRKIAEKIVENIDLKNKEIIEIGCGTGFLTNFLLEKAKFVTCYEIDRNLIPILEKKFKNKNLRIINEDFLLAELEFKEKKTIIANLPYYITSKILFKIFANFEKFDKIILMVQNEVADRIVAKPKTPTYSKLSLASQYIAHVKKLFVVGPDSFFPKPKINSAVVFFDLRTNLDAKKTEQFFWFTKKCFQFKRKTLYNNLIFFLNKQQIEKIYNFFQFAQNIRPQQLDLVTYIRLADFYFNNIF.

Positions 13, 15, 39, 60, 84, and 101 each coordinate S-adenosyl-L-methionine.

The protein belongs to the class I-like SAM-binding methyltransferase superfamily. rRNA adenine N(6)-methyltransferase family. RsmA subfamily.

The protein resides in the cytoplasm. The enzyme catalyses adenosine(1518)/adenosine(1519) in 16S rRNA + 4 S-adenosyl-L-methionine = N(6)-dimethyladenosine(1518)/N(6)-dimethyladenosine(1519) in 16S rRNA + 4 S-adenosyl-L-homocysteine + 4 H(+). Functionally, specifically dimethylates two adjacent adenosines (A1518 and A1519) in the loop of a conserved hairpin near the 3'-end of 16S rRNA in the 30S particle. May play a critical role in biogenesis of 30S subunits. The chain is Ribosomal RNA small subunit methyltransferase A from Mesomycoplasma hyopneumoniae (strain J / ATCC 25934 / NCTC 10110) (Mycoplasma hyopneumoniae).